The sequence spans 241 residues: MSDDDSSHDLPAANLQQLRLPDSASLRPAFSTHRPRILILYGSLRTVSYSRLLAEEARRLLEFFGAEVKVFDPSGLPLPDAAPVSHPKVQELRELSIWSEGQVWVSPERHGAMTGIMKAQIDWIPLSTGSIRPTQGKTLAVMQVSGGSQSFNAVNQMRILGRWMRMITIPNQSSVAKAFQEFDANGRMKPSSYYDRVVDVMEELVKFTLLTRDCSAYLTDRYSERKESAAELEHRVTLKSV.

43–50 (SLRTVSYS) is an FMN binding site.

The protein belongs to the ArsH family. As to quaternary structure, homotetramer. The cofactor is FMN.

Functionally, has NADPH-dependent FMN reductase activity. No activity with NADH. May play a role in resistance to heavy metal toxicity. This chain is NADPH-dependent FMN reductase ArsH, found in Rhizobium meliloti (strain 1021) (Ensifer meliloti).